Consider the following 200-residue polypeptide: MGRPRTSQTRGQGPSGATGGNPRGGGSTTRERDARGARPGERDGGSEIQDRVVQIRRVAKVKKGGRRLNFSALVVVGDGQGRVGVGLGKANTVPAAIAKGQEKARHAMFDVPMRNTTIPHEVVGEYESSRVLLKPASEGTGVIAGGGVRAVLELAGIKDVLTKALGSTTPVNLVRATEDGLRQLRTKAQIEQIRGVKVRL.

The segment covering 1–12 (MGRPRTSQTRGQ) has biased composition (polar residues). Residues 1–49 (MGRPRTSQTRGQGPSGATGGNPRGGGSTTRERDARGARPGERDGGSEIQ) form a disordered region. Positions 13–27 (GPSGATGGNPRGGGS) are enriched in gly residues. The segment covering 29-49 (TRERDARGARPGERDGGSEIQ) has biased composition (basic and acidic residues). In terms of domain architecture, S5 DRBM spans 48-111 (IQDRVVQIRR…EKARHAMFDV (64 aa)).

This sequence belongs to the universal ribosomal protein uS5 family. Part of the 30S ribosomal subunit. Contacts proteins S4 and S8.

In terms of biological role, with S4 and S12 plays an important role in translational accuracy. Its function is as follows. Located at the back of the 30S subunit body where it stabilizes the conformation of the head with respect to the body. This Rubrobacter xylanophilus (strain DSM 9941 / JCM 11954 / NBRC 16129 / PRD-1) protein is Small ribosomal subunit protein uS5.